The chain runs to 312 residues: MRILFFGTAFISETYLKELHKKCHEIFVVTTPDKPALRGQKLIYPAVKVYAVKNNISFIQPEKFTLDVIETIKNFAADTGVAVAYGKLIPKVVFDIPKYKTFNIHFSLLPKYKGAAPVQHALCRGETETGISSFYIEEGLDTGGIIIQEKLNISIKDNAETLLNKLILLGIDVMNKTLELFRCGKCDAASQTGDPSFAPSLKKIDGLVNWNKRAGEIYNQFRGLYLWPGIYSTISQGKLVGKRIKFREIEVFDSDSINKDSGIVYSAEKNRGFTVSCAVGRILVVKMQSENKPVVSAWDFIQGRQISAGDRF.

107-110 (SLLP) contacts (6S)-5,6,7,8-tetrahydrofolate.

This sequence belongs to the Fmt family.

The enzyme catalyses L-methionyl-tRNA(fMet) + (6R)-10-formyltetrahydrofolate = N-formyl-L-methionyl-tRNA(fMet) + (6S)-5,6,7,8-tetrahydrofolate + H(+). Attaches a formyl group to the free amino group of methionyl-tRNA(fMet). The formyl group appears to play a dual role in the initiator identity of N-formylmethionyl-tRNA by promoting its recognition by IF2 and preventing the misappropriation of this tRNA by the elongation apparatus. The protein is Methionyl-tRNA formyltransferase of Endomicrobium trichonymphae.